Here is a 472-residue protein sequence, read N- to C-terminus: Cysteine--tRNA ligase (472 aa).

Cys-28 is a binding site for Zn(2+). The short motif at 30–40 (PTVYDYTHIGH) is the 'HIGH' region element. Residues Cys-207, His-232, and Glu-236 each coordinate Zn(2+). Positions 264–268 (KMSKS) match the 'KMSKS' region motif. Lys-267 lines the ATP pocket.

It belongs to the class-I aminoacyl-tRNA synthetase family. Zn(2+) is required as a cofactor.

The protein resides in the cytoplasm. It catalyses the reaction tRNA(Cys) + L-cysteine + ATP = L-cysteinyl-tRNA(Cys) + AMP + diphosphate. The chain is Cysteine--tRNA ligase (cysS) from Aeropyrum pernix (strain ATCC 700893 / DSM 11879 / JCM 9820 / NBRC 100138 / K1).